The primary structure comprises 237 residues: Bax inhibitor 1 (237 aa).

Over methionine 1–lysine 29 the chain is Cytoplasmic. Lysine 7 is covalently cross-linked (Glycyl lysine isopeptide (Lys-Gly) (interchain with G-Cter in ubiquitin)). A helical membrane pass occupies residues valine 30–valine 50. Topologically, residues threonine 51 to histidine 52 are lumenal. Residues phenylalanine 53–alanine 73 form a helical membrane-spanning segment. The Cytoplasmic segment spans residues threonine 74–glycine 86. The helical transmembrane segment at leucine 87 to isoleucine 107 threads the bilayer. Residues alanine 108–serine 112 are Lumenal-facing. A helical transmembrane segment spans residues isoleucine 113 to leucine 133. Topologically, residues tyrosine 134 to serine 139 are cytoplasmic. Residues tyrosine 140 to glycine 160 form a helical membrane-spanning segment. The Lumenal portion of the chain corresponds to asparagine 161–serine 166. Residues isoleucine 167–phenylalanine 187 form a helical membrane-spanning segment. Topologically, residues aspartate 188–histidine 206 are cytoplasmic. Positions cysteine 207–methionine 227 form an intramembrane region, helical. At asparagine 228–lysine 237 the chain is on the cytoplasmic side.

Belongs to the BI1 family. As to quaternary structure, interacts with BCL2 and BCL2L1. Interacts with ERN1. Ubiquitinated by BFAR, leading to proteasomal degradation. In terms of tissue distribution, highly abundant in testis.

The protein localises to the endoplasmic reticulum membrane. In terms of biological role, endoplasmic reticulum (ER)-resident protein that confers cellular protection as an anti-apoptotic protein by limiting multiple stress-inducing pathways surrounding the endoplasmic reticulum and mitochondria. Inhibits the activities of the key sensor for the endoplasmic reticulum unfolded protein response IRE1alpha/ERN1 both directly and by blocking BAX/BAK binding. Modulates ER calcium homeostasis by acting as a calcium-leak channel. Negatively regulates autophagy and autophagosome formation, especially during periods of nutrient deprivation, and reduces cell survival during starvation. The protein is Bax inhibitor 1 (TMBIM6) of Homo sapiens (Human).